The chain runs to 231 residues: Orotidine 5'-phosphate decarboxylase (231 aa).

Residues Asp11, Lys33, 60 to 69, Thr120, Arg181, Gln190, Gly210, and Arg211 contribute to the substrate site; that span reads DLKFHDIPNT. Catalysis depends on Lys62, which acts as the Proton donor.

This sequence belongs to the OMP decarboxylase family. Type 1 subfamily. As to quaternary structure, homodimer.

The enzyme catalyses orotidine 5'-phosphate + H(+) = UMP + CO2. It functions in the pathway pyrimidine metabolism; UMP biosynthesis via de novo pathway; UMP from orotate: step 2/2. Functionally, catalyzes the decarboxylation of orotidine 5'-monophosphate (OMP) to uridine 5'-monophosphate (UMP). This is Orotidine 5'-phosphate decarboxylase from Vibrio cholerae serotype O1 (strain ATCC 39315 / El Tor Inaba N16961).